An 80-amino-acid chain; its full sequence is Large ribosomal subunit protein uL24 (80 aa).

It belongs to the universal ribosomal protein uL24 family. As to quaternary structure, part of the 50S ribosomal subunit.

One of two assembly initiator proteins, it binds directly to the 5'-end of the 23S rRNA, where it nucleates assembly of the 50S subunit. In terms of biological role, one of the proteins that surrounds the polypeptide exit tunnel on the outside of the subunit. The sequence is that of Large ribosomal subunit protein uL24 from Prosthecochloris aestuarii (strain DSM 271 / SK 413).